A 27-amino-acid polypeptide reads, in one-letter code: Protein YqiM (27 aa).

In Escherichia coli (strain K12), this protein is Protein YqiM.